Here is a 105-residue protein sequence, read N- to C-terminus: Nucleoid-associated protein Dred_0043 (105 aa).

This sequence belongs to the YbaB/EbfC family. In terms of assembly, homodimer.

It is found in the cytoplasm. It localises to the nucleoid. Its function is as follows. Binds to DNA and alters its conformation. May be involved in regulation of gene expression, nucleoid organization and DNA protection. The protein is Nucleoid-associated protein Dred_0043 of Desulforamulus reducens (strain ATCC BAA-1160 / DSM 100696 / MI-1) (Desulfotomaculum reducens).